The primary structure comprises 80 residues: Exodeoxyribonuclease 7 small subunit (80 aa).

This sequence belongs to the XseB family. Heterooligomer composed of large and small subunits.

The protein resides in the cytoplasm. It carries out the reaction Exonucleolytic cleavage in either 5'- to 3'- or 3'- to 5'-direction to yield nucleoside 5'-phosphates.. In terms of biological role, bidirectionally degrades single-stranded DNA into large acid-insoluble oligonucleotides, which are then degraded further into small acid-soluble oligonucleotides. This is Exodeoxyribonuclease 7 small subunit from Aliivibrio fischeri (strain ATCC 700601 / ES114) (Vibrio fischeri).